The primary structure comprises 358 residues: Phospho-N-acetylmuramoyl-pentapeptide-transferase (358 aa).

The next 10 membrane-spanning stretches (helical) occupy residues 21–41 (YLTL…FVVG), 71–91 (TMGG…WADL), 95–115 (YIWV…VDDY), 133–153 (FWQS…ASVA), 166–186 (VAVN…VGSS), 197–217 (GLAV…AYAA), 234–254 (AGEL…FLWF), 261–281 (VFMG…LAVL), 286–306 (LVLF…MLQV), and 337–357 (IVRF…TLKI).

The protein belongs to the glycosyltransferase 4 family. MraY subfamily. It depends on Mg(2+) as a cofactor.

It is found in the cell inner membrane. It carries out the reaction UDP-N-acetyl-alpha-D-muramoyl-L-alanyl-gamma-D-glutamyl-meso-2,6-diaminopimeloyl-D-alanyl-D-alanine + di-trans,octa-cis-undecaprenyl phosphate = di-trans,octa-cis-undecaprenyl diphospho-N-acetyl-alpha-D-muramoyl-L-alanyl-D-glutamyl-meso-2,6-diaminopimeloyl-D-alanyl-D-alanine + UMP. It functions in the pathway cell wall biogenesis; peptidoglycan biosynthesis. Its function is as follows. Catalyzes the initial step of the lipid cycle reactions in the biosynthesis of the cell wall peptidoglycan: transfers peptidoglycan precursor phospho-MurNAc-pentapeptide from UDP-MurNAc-pentapeptide onto the lipid carrier undecaprenyl phosphate, yielding undecaprenyl-pyrophosphoryl-MurNAc-pentapeptide, known as lipid I. The sequence is that of Phospho-N-acetylmuramoyl-pentapeptide-transferase from Nitrosococcus oceani (strain ATCC 19707 / BCRC 17464 / JCM 30415 / NCIMB 11848 / C-107).